The chain runs to 382 residues: Galactokinase (382 aa).

34–37 (EHTD) serves as a coordination point for substrate. Residue 124–130 (GAGLSSS) coordinates ATP. Residues S130 and E162 each contribute to the Mg(2+) site. The active-site Proton acceptor is the D174. Y223 is a binding site for substrate.

This sequence belongs to the GHMP kinase family. GalK subfamily.

It is found in the cytoplasm. The enzyme catalyses alpha-D-galactose + ATP = alpha-D-galactose 1-phosphate + ADP + H(+). It participates in carbohydrate metabolism; galactose metabolism. Functionally, catalyzes the transfer of the gamma-phosphate of ATP to D-galactose to form alpha-D-galactose-1-phosphate (Gal-1-P). The polypeptide is Galactokinase (Salmonella paratyphi C (strain RKS4594)).